The primary structure comprises 224 residues: MINQKKIAGEKACEWIEDGMVVGLGTGSTVYYTIEKLGEMVQKGLNITGVSTSIETEQQARTLGIPLKSLNDVTKIDVTIDGADEINQAFQGIKGGGGALLREKMVAQASSKNIWVVGEEKLVTELGKFPLPLEVIPFGWKQIKRMLENDGVETTLRKQSSGEIYETNNGNYILDIINQTFTNPEAWHEKLAGIPGVLEHGLFLHYVDIIICGKASGEIEIIKK.

Residues 26 to 29, 81 to 84, and 94 to 97 contribute to the substrate site; these read TGST, DGAD, and KGGG. Glu103 acts as the Proton acceptor in catalysis. Residue Lys121 participates in substrate binding.

Belongs to the ribose 5-phosphate isomerase family. As to quaternary structure, homodimer.

It catalyses the reaction aldehydo-D-ribose 5-phosphate = D-ribulose 5-phosphate. It functions in the pathway carbohydrate degradation; pentose phosphate pathway; D-ribose 5-phosphate from D-ribulose 5-phosphate (non-oxidative stage): step 1/1. Its function is as follows. Catalyzes the reversible conversion of ribose-5-phosphate to ribulose 5-phosphate. This is Ribose-5-phosphate isomerase A from Listeria innocua serovar 6a (strain ATCC BAA-680 / CLIP 11262).